The sequence spans 239 residues: IkB-like protein (239 aa).

ANK repeat units follow at residues 48 to 77 (NKIT…YPGE), 87 to 116 (DGNS…KNGI), 124 to 153 (NGVT…NPNR), and 158 to 187 (KGFT…KPLF). The short motif at 81 to 87 (HYRRDKD) is the Nuclear localization signal element. The Nuclear localization signal motif lies at 203–214 (KKKPKIIITGCE). The PxIxITxC motif; Interaction with host PPP3CA motif lies at 206 to 213 (PKIIITGC). Positions 228 to 231 (FLCV) match the FLCV motif motif.

It belongs to the asfivirus A238L family. As to quaternary structure, interacts with host PPIA. Interacts with host PPP3CA/Calcineurin. Interacts with host RELA/p65; interaction of the 32 kDa form with host RELA results in the formation of a stable complex with NF-kappa-B. Interacts with host PPP3R1. Interacts with host EP300; this interaction inhibits the association of host EP300 with host RELA, JUN and NFATC2. The protein exists in a 28 kDa and a 32 kDa form, probably due to post-translational modifications which are neither phosphorylation, nor sumoylation.

Its subcellular location is the host nucleus. The protein resides in the host cytoplasm. Its function is as follows. IkB-like protein that inhibits the binding of NF-kappa-B to DNA, thereby downregulating pro-inflammatory cytokine production. Forms a heterodimer with the NF-kappa-B subunit RELA/p65 and prevents the activation of the NF-kappa-B transcription factor. Inhibits calcineurin function, which is required for the induction of nuclear factor of activated T cells (NFAT)-dependent immune response genes. Prevents the binding of substrates to calcineurin without affecting the phosphatase activity. Does not contain the serine residues that are phosphorylated by host IkB kinase and thus is not degraded following stimulation of the NFkB pathway. This chain is IkB-like protein (A238L), found in Ornithodoros (relapsing fever ticks).